The chain runs to 885 residues: Putative membrane protein YdgH (885 aa).

A run of 7 helical transmembrane segments spans residues 9–29 (WAIA…SPNL), 181–201 (IIGL…PIVV), 202–222 (VGFS…NVDF), 227–247 (FTQT…CILL), 278–298 (ISGF…FAIF), 304–324 (VAVG…LFMV), and 354–374 (VARP…FILT). The segment at 498 to 518 (MAGQTGSASNGGSGGSLGDAA) is disordered. Transmembrane regions (helical) follow at residues 716–736 (MVIM…SMIM), 740–760 (MIAS…LIFV), 772–792 (VPFF…IFLL), 817–837 (VIIT…PSGV), and 847–867 (IIIG…PAII).

This sequence belongs to the resistance-nodulation-cell division (RND) (TC 2.A.6) family. MmpL subfamily.

The protein resides in the cell membrane. The polypeptide is Putative membrane protein YdgH (ydgH) (Bacillus subtilis (strain 168)).